The chain runs to 630 residues: 1-deoxy-D-xylulose-5-phosphate synthase (630 aa).

Residues histidine 72 and 113-115 contribute to the thiamine diphosphate site; that span reads GHS. Residue aspartate 144 participates in Mg(2+) binding. Thiamine diphosphate-binding positions include 145 to 146, asparagine 173, tyrosine 284, and glutamate 367; that span reads GA. Asparagine 173 is a Mg(2+) binding site.

Belongs to the transketolase family. DXPS subfamily. Homodimer. Mg(2+) is required as a cofactor. The cofactor is thiamine diphosphate.

It carries out the reaction D-glyceraldehyde 3-phosphate + pyruvate + H(+) = 1-deoxy-D-xylulose 5-phosphate + CO2. Its pathway is metabolic intermediate biosynthesis; 1-deoxy-D-xylulose 5-phosphate biosynthesis; 1-deoxy-D-xylulose 5-phosphate from D-glyceraldehyde 3-phosphate and pyruvate: step 1/1. Its function is as follows. Catalyzes the acyloin condensation reaction between C atoms 2 and 3 of pyruvate and glyceraldehyde 3-phosphate to yield 1-deoxy-D-xylulose-5-phosphate (DXP). The chain is 1-deoxy-D-xylulose-5-phosphate synthase from Bacillus cereus (strain AH187).